The primary structure comprises 162 residues: Ciliary microtubule inner protein 5 (162 aa).

The interval 1–44 (MGSHPTPGLQRTTSAGYRLPPTRPPASVSPAARGGPMASRGLAG) is disordered.

The protein localises to the cell projection. It localises to the cilium. This Homo sapiens (Human) protein is Ciliary microtubule inner protein 5.